Consider the following 400-residue polypeptide: SEC14-like protein 3 (400 aa).

Residues 76 to 249 enclose the CRAL-TRIO domain; sequence PPEVIQKYMP…QFGGTLTDPD (174 aa). The 109-residue stretch at 275 to 383 folds into the GOLD domain; it reads KTQYEHSVQI…AKKVSFTVEV (109 aa).

Probable hydrophobic ligand-binding protein; may play a role in the transport of hydrophobic ligands like tocopherol, squalene and phospholipids. The sequence is that of SEC14-like protein 3 (SEC14L3) from Homo sapiens (Human).